The following is a 189-amino-acid chain: HGPRTase-like protein (189 aa).

It belongs to the purine/pyrimidine phosphoribosyltransferase family. Archaeal HPRT subfamily.

Its function is as follows. May catalyze a purine salvage reaction, the substrate is unknown. This Halorhabdus utahensis (strain DSM 12940 / JCM 11049 / AX-2) protein is HGPRTase-like protein.